The sequence spans 95 residues: Nucleoid-associated protein MARTH_orf159 (95 aa).

The protein belongs to the YbaB/EbfC family. In terms of assembly, homodimer.

It localises to the cytoplasm. Its subcellular location is the nucleoid. In terms of biological role, binds to DNA and alters its conformation. May be involved in regulation of gene expression, nucleoid organization and DNA protection. The polypeptide is Nucleoid-associated protein MARTH_orf159 (Metamycoplasma arthritidis (strain 158L3-1) (Mycoplasma arthritidis)).